The chain runs to 452 residues: Aspartyl/glutamyl-tRNA(Asn/Gln) amidotransferase subunit B (452 aa).

This sequence belongs to the GatB/GatE family. GatB subfamily. As to quaternary structure, heterotrimer of A, B and C subunits.

It catalyses the reaction L-glutamyl-tRNA(Gln) + L-glutamine + ATP + H2O = L-glutaminyl-tRNA(Gln) + L-glutamate + ADP + phosphate + H(+). The enzyme catalyses L-aspartyl-tRNA(Asn) + L-glutamine + ATP + H2O = L-asparaginyl-tRNA(Asn) + L-glutamate + ADP + phosphate + 2 H(+). Its function is as follows. Allows the formation of correctly charged Asn-tRNA(Asn) or Gln-tRNA(Gln) through the transamidation of misacylated Asp-tRNA(Asn) or Glu-tRNA(Gln) in organisms which lack either or both of asparaginyl-tRNA or glutaminyl-tRNA synthetases. The reaction takes place in the presence of glutamine and ATP through an activated phospho-Asp-tRNA(Asn) or phospho-Glu-tRNA(Gln). This Methanosphaera stadtmanae (strain ATCC 43021 / DSM 3091 / JCM 11832 / MCB-3) protein is Aspartyl/glutamyl-tRNA(Asn/Gln) amidotransferase subunit B.